A 423-amino-acid polypeptide reads, in one-letter code: Transducer protein Htr13 (423 aa).

Residues 1-19 (MTGPDNSLTDPSASPSTPV) show a composition bias toward polar residues. Positions 1 to 21 (MTGPDNSLTDPSASPSTPVAS) are disordered. Residues 152–388 (AVAELIERAR…ELTMMIDEAA (237 aa)) enclose the Methyl-accepting transducer domain.

This sequence belongs to the methyl-accepting chemotaxis (MCP) protein family. Methylated by CheR.

The protein localises to the cytoplasm. In terms of biological role, potentially involved in chemo- or phototactic signal transduction. This chain is Transducer protein Htr13 (htr13), found in Halobacterium salinarum (strain ATCC 29341 / DSM 671 / R1).